Here is a 184-residue protein sequence, read N- to C-terminus: Photosystem I assembly protein Ycf4 (184 aa).

The next 2 membrane-spanning stretches (helical) occupy residues 22–42 (FCWA…GTSS) and 57–77 (IVFF…LFIS).

This sequence belongs to the Ycf4 family.

It is found in the plastid. It localises to the chloroplast thylakoid membrane. In terms of biological role, seems to be required for the assembly of the photosystem I complex. This is Photosystem I assembly protein Ycf4 from Lactuca sativa (Garden lettuce).